A 953-amino-acid polypeptide reads, in one-letter code: Coatomer subunit beta (953 aa).

Threonine 2 is modified (N-acetylthreonine). HEAT repeat units lie at residues 96 to 131 (HEMI…KEAE), 132 to 168 (LLEP…NFEH), 240 to 276 (SERA…SAPT), 277 to 314 (AIKA…HPAH), 316 to 353 (RVLQ…SRNV), and 396 to 433 (DMAA…RFDN). Lysine 494 is subject to N6-acetyllysine.

In terms of assembly, oligomeric complex that consists of at least the alpha, beta, beta', gamma, delta, epsilon and zeta subunits. Interacts with SCYL1. Interacts with COPG1. Interacts (via trunk domain) with ARF1 (via switch I region); the interaction is direct. Interacts with KCNK2/TREK (via N-terminus); this interaction increases the channel-mediated whole cell currents and promotes plasma membrane expression of KCNK2/TREK. Interacts with anthrax lethal factor (LF); this interaction may facilitate endosomal vesicle membrane translocation of LF and its release from the lumen of endosomal vesicles to external milieu. Interacts with CAPN8 and PRKCE. Interacts with ARF1 (myristoylated); this interaction is required for binding of COPB1 to Golgi membranes. Interacts with STX17. Interacts with TMEM115. Interacts with HLA-G-B2M complex; this interaction mediates the endoplasmic reticulum (ER) retrieval of HLA-E-B2M complexes that bind low affinity peptides. Interacts with TMEM41B. As to quaternary structure, (Microbial infection) Interacts (via C-terminus) with HIV-1 Nef; the interaction is direct. Proteolytically cleaved between Ser-528 and Ser-529 by CAPN8.

It is found in the cytoplasm. Its subcellular location is the golgi apparatus membrane. The protein resides in the cytoplasmic vesicle. It localises to the COPI-coated vesicle membrane. The protein localises to the cell membrane. It is found in the endoplasmic reticulum-Golgi intermediate compartment. Its function is as follows. The coatomer is a cytosolic protein complex that binds to dilysine motifs and reversibly associates with Golgi non-clathrin-coated vesicles, which further mediate biosynthetic protein transport from the ER, via the Golgi up to the trans Golgi network. Coatomer complex is required for budding from Golgi membranes, and is essential for the retrograde Golgi-to-ER transport of dilysine-tagged proteins. In mammals, the coatomer can only be recruited by membranes associated to ADP-ribosylation factors (ARFs), which are small GTP-binding proteins; the complex also influences the Golgi structural integrity, as well as the processing, activity, and endocytic recycling of LDL receptors. Plays a functional role in facilitating the transport of kappa-type opioid receptor mRNAs into axons and enhances translation of these proteins. Required for limiting lipid storage in lipid droplets. Involved in lipid homeostasis by regulating the presence of perilipin family members PLIN2 and PLIN3 at the lipid droplet surface and promoting the association of adipocyte surface triglyceride lipase (PNPLA2) with the lipid droplet to mediate lipolysis. Involved in the Golgi disassembly and reassembly processes during cell cycle. Involved in autophagy by playing a role in early endosome function. Plays a role in organellar compartmentalization of secretory compartments including endoplasmic reticulum (ER)-Golgi intermediate compartment (ERGIC), Golgi, trans-Golgi network (TGN) and recycling endosomes, and in biosynthetic transport of CAV1. Promotes degradation of Nef cellular targets CD4 and MHC class I antigens by facilitating their trafficking to degradative compartments. In Homo sapiens (Human), this protein is Coatomer subunit beta.